The primary structure comprises 498 residues: Putative antiporter subunit mnhD2 (498 aa).

The next 14 helical transmembrane spans lie at 2–22, 32–52, 78–98, 108–128, 130–150, 161–181, 209–229, 240–260, 271–291, 308–328, 330–350, 369–389, 406–426, and 451–471; these read LSNL…ILVF, YLYL…LIYV, LSLI…AYGF, YHLP…FLTS, LFNL…LITL, IIYV…IGLL, ISLI…FMWL, LAAL…IRFF, IHPL…IGVI, IGFI…GAIF, LVND…LVYI, FGVA…FSGF, IGLA…FRIF, and ILSI…VVLN.

The protein belongs to the CPA3 antiporters (TC 2.A.63) subunit D family. May form a heterooligomeric complex that consists of seven subunits: mnhA2, mnhB2, mnhC2, mnhD2, mnhE2, mnhF2 and mnhG2.

The protein resides in the cell membrane. The chain is Putative antiporter subunit mnhD2 (mnhD2) from Staphylococcus aureus (strain Mu3 / ATCC 700698).